A 65-amino-acid polypeptide reads, in one-letter code: Cell death protein rpr (65 aa).

As to quaternary structure, interacts with Diap2 (via BIR2 domain).

Functionally, activator of apoptosis, as well as grim and hid, that acts on the effector Dredd. This is Cell death protein rpr (rpr) from Drosophila melanogaster (Fruit fly).